The sequence spans 476 residues: Hyaluronidase-2 (476 aa).

The N-terminal stretch at Met-1–Ala-20 is a signal peptide. Disulfide bonds link Cys-47/Cys-343 and Cys-214/Cys-230. N-linked (GlcNAc...) asparagine glycans are attached at residues Asn-77 and Asn-106. The active-site Proton donor is the Glu-138. N-linked (GlcNAc...) asparagine glycosylation is found at Asn-340 and Asn-360. The EGF-like domain maps to Ala-364–Gln-442. 3 cysteine pairs are disulfide-bonded: Cys-368-Cys-379, Cys-373-Cys-430, and Cys-432-Cys-441. Gly-451 is lipidated: GPI-anchor amidated glycine. A propeptide spans Ala-452–Ser-476 (removed in mature form).

Belongs to the glycosyl hydrolase 56 family. As to quaternary structure, interacts with MST1R. (Microbial infection) Interacts with Jaagsiekte sheep retrovirus (JSRV) envelope proteins.

It localises to the cell membrane. It catalyses the reaction Random hydrolysis of (1-&gt;4)-linkages between N-acetyl-beta-D-glucosamine and D-glucuronate residues in hyaluronate.. Functionally, catalyzes hyaluronan degradation into small fragments that are endocytosed and degraded in lysosomes by HYAL1 and exoglycosidases. Essential for the breakdown of extracellular matrix hyaluronan. This chain is Hyaluronidase-2 (HYAL2), found in Ovis aries (Sheep).